The chain runs to 311 residues: Chemotaxis protein CheV3 (311 aa).

In terms of domain architecture, CheW-like spans 13 to 164 (EIELVDFRIY…LESILDDLKL (152 aa)). Residues 182 to 308 (EVLFLDDSKT…FTEEISKILD (127 aa)) enclose the Response regulatory domain. A 4-aspartylphosphate modification is found at D241.

Its function is as follows. Plays a role in chemotaxis signal transduction system in order to colonize the host stomach. May act as a phosphate sink to control the flow of phosphate to CheAY. The polypeptide is Chemotaxis protein CheV3 (Helicobacter pylori (strain ATCC 700392 / 26695) (Campylobacter pylori)).